The chain runs to 515 residues: GMP synthase [glutamine-hydrolyzing] (515 aa).

The Glutamine amidotransferase type-1 domain occupies 6 to 198 (KVIILDFGSQ…VFKVAGLKAD (193 aa)). Residue Cys83 is the Nucleophile of the active site. Catalysis depends on residues His172 and Glu174. The GMPS ATP-PPase domain maps to 199-390 (WTMSSFVENC…LGLPEFIIWR (192 aa)). Residue 226–232 (SGGIDST) participates in ATP binding.

As to quaternary structure, homodimer.

It catalyses the reaction XMP + L-glutamine + ATP + H2O = GMP + L-glutamate + AMP + diphosphate + 2 H(+). It participates in purine metabolism; GMP biosynthesis; GMP from XMP (L-Gln route): step 1/1. Catalyzes the synthesis of GMP from XMP. This is GMP synthase [glutamine-hydrolyzing] from Maridesulfovibrio salexigens (strain ATCC 14822 / DSM 2638 / NCIMB 8403 / VKM B-1763) (Desulfovibrio salexigens).